A 351-amino-acid polypeptide reads, in one-letter code: (S)-coclaurine N-methyltransferase (351 aa).

S-adenosyl-L-methionine-binding positions include 91–92 (QS), 126–134 (VLDLGCGLG), 130–132 (GCG), and 153–158 (TSSVEQ). The active site involves Cys326.

This sequence belongs to the CFA/CMAS family. In terms of tissue distribution, expressed in roots, stems, flower buds and at lower levels, in leaves. Restricted to sieve elements of the phloem adjacent or proximal to laticifers.

Its subcellular location is the cytoplasm. The catalysed reaction is (S)-coclaurine + S-adenosyl-L-methionine = (S)-N-methylcoclaurine + S-adenosyl-L-homocysteine + H(+). The protein operates within alkaloid biosynthesis; (S)-reticuline biosynthesis; (S)-reticuline from (S)-norcoclaurine: step 2/4. Its function is as follows. Involved in the biosynthesis of benzylisoquinoline alkaloids. N-methyltransferase methylating (S)-coclaurine. 4'-O-methylcoclaurine and norlaudanine can also be used as substrates. In Papaver somniferum (Opium poppy), this protein is (S)-coclaurine N-methyltransferase.